A 952-amino-acid polypeptide reads, in one-letter code: Histone deacetylase 7 (952 aa).

2 transcription repression regions span residues 1-268 and 218-546; these read MDLR…DSDR and GPNP…EHAG. Residues 49–149 form an interaction with MEF2A region; sequence SMDTPMPELQ…LPSDPPEHFP (101 aa). At Ser109 the chain carries Phosphoserine. Disordered regions lie at residues 130-224 and 261-283; these read LSSF…PILG and PARA…ILGS. Position 155 is a phosphoserine; by MARK2, MARK3 and PKD/PRKD1 (Ser155). The segment covering 167 to 181 has biased composition (basic and acidic residues); the sequence is KSLERRKNPLLRKES. Residue Ser181 is modified to Phosphoserine; by PKD/PRKD2. Positions 197-212 are enriched in low complexity; it reads SSPSSSSTPASGCSSP. A Phosphoserine modification is found at Ser283. Thr286 is subject to Phosphothreonine. 3 disordered regions span residues 349-377, 389-441, and 460-510; these read LHWP…MQPR, KRSA…GPAP, and LPRG…SSSE. Ser358 bears the Phosphoserine; by PKD/PRKD1 mark. Over residues 360–374 the composition is skewed to pro residues; that stretch reads PLPPSATAPPPPGPM. Residues Ser364, Ser405, Ser486, Ser487, and Ser507 each carry the phosphoserine modification. Low complexity predominate over residues 482 to 503; the sequence is SRAQSSPAAPASLSAPEPASQA. Positions 512 to 865 are histone deacetylase; the sequence is PARTLPFTTG…VAALLGNRVD (354 aa). Zn(2+)-binding residues include Cys533, Cys535, and His541. Residue Ser595 is modified to Phosphoserine. Cys618 is a binding site for Zn(2+). His670 is an active-site residue. Residues 877–952 form an interaction with SIN3A region; it reads NLNAIRSLEA…LVEEEEPMNL (76 aa). The Nuclear export signal motif lies at 917-952; sequence KEEVEAVTALASLSVGILAEDRPSEQLVEEEEPMNL.

Belongs to the histone deacetylase family. HD type 2 subfamily. As to quaternary structure, interacts with HDAC1, HDAC2, HDAC3, HDAC4, HDAC5, NCOR1, NCOR2, SIN3A, SIN3B, RBBP4, RBBP7, MTA1L1, SAP30 and MBD3. Interacts with KAT5 and EDNRA. Interacts with the 14-3-3 protein YWHAE, MEF2A, MEF2B and MEF2C. Interacts with ZMYND15. Interacts with KDM5B. Interacts with PML. Interacts with FOXP3. Interacts with RARA. Post-translationally, may be phosphorylated by CaMK1. Phosphorylated by the PKC kinases PKN1 and PKN2, impairing nuclear import. Phosphorylation at Ser-155 by MARK2, MARK3 and PRKD1 promotes interaction with 14-3-3 proteins and export from the nucleus. Phosphorylation at Ser-155 is a prerequisite for phosphorylation at Ser-181.

It is found in the nucleus. The protein resides in the cytoplasm. The catalysed reaction is N(6)-acetyl-L-lysyl-[histone] + H2O = L-lysyl-[histone] + acetate. It catalyses the reaction N(6)-acetyl-L-lysyl-[protein] + H2O = L-lysyl-[protein] + acetate. Its function is as follows. Responsible for the deacetylation of lysine residues on the N-terminal part of the core histones (H2A, H2B, H3 and H4). Histone deacetylation gives a tag for epigenetic repression and plays an important role in transcriptional regulation, cell cycle progression and developmental events. Histone deacetylases act via the formation of large multiprotein complexes. Involved in muscle maturation by repressing transcription of myocyte enhancer factors such as MEF2A, MEF2B and MEF2C. During muscle differentiation, it shuttles into the cytoplasm, allowing the expression of myocyte enhancer factors. May be involved in Epstein-Barr virus (EBV) latency, possibly by repressing the viral BZLF1 gene. Positively regulates the transcriptional repressor activity of FOXP3. Serves as a corepressor of RARA, causing its deacetylation and inhibition of RARE DNA element binding. In association with RARA, plays a role in the repression of microRNA-10a and thereby in the inflammatory response. Also acetylates non-histone proteins, such as ALKBH5. The chain is Histone deacetylase 7 (HDAC7) from Homo sapiens (Human).